A 114-amino-acid chain; its full sequence is Ribonuclease P protein component (114 aa).

This sequence belongs to the RnpA family. Consists of a catalytic RNA component (M1 or rnpB) and a protein subunit.

It carries out the reaction Endonucleolytic cleavage of RNA, removing 5'-extranucleotides from tRNA precursor.. RNaseP catalyzes the removal of the 5'-leader sequence from pre-tRNA to produce the mature 5'-terminus. It can also cleave other RNA substrates such as 4.5S RNA. The protein component plays an auxiliary but essential role in vivo by binding to the 5'-leader sequence and broadening the substrate specificity of the ribozyme. The polypeptide is Ribonuclease P protein component (Alkaliphilus oremlandii (strain OhILAs) (Clostridium oremlandii (strain OhILAs))).